Here is a 172-residue protein sequence, read N- to C-terminus: MDKVLNREESMELMDLLGLERAAWGNLPLMRKAYLKKCKEFHPDKGGDEDKMKRMNTLYKKMEQDVKVAHQPDFGTWNSSEVCADFPLCPDTLYCKEWPICSKKPSVHCPCMLCQLRLRHLNRKFLRKEPLVWIDCYCIDCFTQWFGLDLTEETLQWWVQIIGETPFRDLKL.

Position 1 is an N-acetylmethionine; by host (methionine 1). One can recognise a J domain in the interval glutamate 12–glycine 75. A C4-type; atypical zinc finger spans residues cysteine 101 to cysteine 114. The H1C3-type; atypical zinc finger occupies histidine 120–cysteine 141.

In terms of assembly, interacts with host PPP2R1A; the interaction inhibits PP2A activity.

The protein localises to the host cytoplasm. Its subcellular location is the host nucleus. Its function is as follows. Promotes efficient viral genome replication by accelerating both G1 and S phase progression of the cell cycle. Inhibits host PP2A by binding to the A subunit, thereby displacing lower affinity regulatory B subunit. Inactivation of PP2A in turn results in the transactivation of cyclin A and cyclin D1 promoters. Late during the infection cycle, ST may induce dephosphorylation of host MTOR, leading to the inhibition of cap-dependent translation. May establish and maintain high levels of viral genomes during persistent infection in cell culture. This is Small t antigen from BK polyomavirus (strain AS) (BKPyV).